A 334-amino-acid chain; its full sequence is Glutaredoxin-3 (334 aa).

Residue Ala2 is modified to N-acetylalanine. The Thioredoxin domain maps to 2–116; it reads AGGAAEAAAA…LTKKVQRHAS (115 aa). The tract at residues 110–131 is disordered; sequence KVQRHASSGSFSPSGSEHPKED. Residues Ser116 and Ser119 each carry the phosphoserine modification. Residues 116–125 are compositionally biased toward low complexity; it reads SSGSFSPSGS. Glutaredoxin domains are found at residues 145 to 235 and 236 to 334; these read CMLF…PKLE and ERLK…KGEN. Positions 158 and 260 each coordinate [2Fe-2S] cluster.

In terms of assembly, homodimer; the homodimer is independent of 2Fe-2S clusters. Heterotrimer; forms a heterotrimeric complex composed by two BOLA2 molecules and one GLRX3 molecule; linked by [2Fe-2S] clusters. Interacts (via N-terminus) with PRKCQ/PKC-theta. Interacts (via C-terminus) with CSRP3. Interacts with CSRP2.

Its subcellular location is the cytoplasm. The protein resides in the cytosol. The protein localises to the cell cortex. It localises to the myofibril. It is found in the sarcomere. Its subcellular location is the z line. Functionally, together with BOLA2, acts as a cytosolic iron-sulfur (Fe-S) cluster assembly factor that facilitates [2Fe-2S] cluster insertion into a subset of cytosolic proteins. Acts as a critical negative regulator of cardiac hypertrophy and a positive inotropic regulator. Required for hemoglobin maturation. Does not possess any thyoredoxin activity since it lacks the conserved motif that is essential for catalytic activity. The polypeptide is Glutaredoxin-3 (GLRX3) (Bos taurus (Bovine)).